Here is a 229-residue protein sequence, read N- to C-terminus: Uracil-DNA glycosylase (229 aa).

The active-site Proton acceptor is Asp-72.

This sequence belongs to the uracil-DNA glycosylase (UDG) superfamily. UNG family.

It is found in the cytoplasm. The enzyme catalyses Hydrolyzes single-stranded DNA or mismatched double-stranded DNA and polynucleotides, releasing free uracil.. Functionally, excises uracil residues from the DNA which can arise as a result of misincorporation of dUMP residues by DNA polymerase or due to deamination of cytosine. This chain is Uracil-DNA glycosylase, found in Dichelobacter nodosus (strain VCS1703A).